The chain runs to 528 residues: Peptide chain release factor 3 (528 aa).

Residues aspartate 10–histidine 278 form the tr-type G domain. GTP-binding positions include serine 19 to threonine 26, aspartate 87 to histidine 91, and asparagine 141 to aspartate 144.

Belongs to the TRAFAC class translation factor GTPase superfamily. Classic translation factor GTPase family. PrfC subfamily.

The protein resides in the cytoplasm. Increases the formation of ribosomal termination complexes and stimulates activities of RF-1 and RF-2. It binds guanine nucleotides and has strong preference for UGA stop codons. It may interact directly with the ribosome. The stimulation of RF-1 and RF-2 is significantly reduced by GTP and GDP, but not by GMP. This is Peptide chain release factor 3 from Syntrophobacter fumaroxidans (strain DSM 10017 / MPOB).